The sequence spans 536 residues: Ribulokinase (536 aa).

Belongs to the ribulokinase family.

The enzyme catalyses D-ribulose + ATP = D-ribulose 5-phosphate + ADP + H(+). It carries out the reaction L-ribulose + ATP = L-ribulose 5-phosphate + ADP + H(+). Its pathway is carbohydrate degradation; L-arabinose degradation via L-ribulose; D-xylulose 5-phosphate from L-arabinose (bacterial route): step 2/3. The sequence is that of Ribulokinase from Staphylococcus epidermidis (strain ATCC 35984 / DSM 28319 / BCRC 17069 / CCUG 31568 / BM 3577 / RP62A).